A 2385-amino-acid chain; its full sequence is Neuron navigator 3 (2385 aa).

The interval 17–38 (SKPVHTALPIPNLGTTGSQHCS) is disordered. Residues 29–38 (LGTTGSQHCS) show a composition bias toward polar residues. The region spanning 77-184 (KEDSKIYTDW…LFFSLSRYKQ (108 aa)) is the Calponin-homology (CH) domain. Residues 203–625 (VTHASPPSEA…LPQQQQHSHP (423 aa)) are disordered. Polar residues-rich tracts occupy residues 210–243 (SEAS…TSQK), 258–279 (GSSS…FNSI), and 297–316 (KGPQ…STAG). The segment covering 318–329 (PPASAIPSPSAS) has biased composition (low complexity). A compositionally biased stretch (polar residues) spans 335–352 (KSMNVKHSATSTMLTVKQ). Composition is skewed to low complexity over residues 353-363 (SSTATSPTPSS) and 427-439 (NSGL…TNSS). A compositionally biased stretch (basic and acidic residues) spans 465–491 (PKEKEEKNRDKNKVCTEKPVKEEKDQV). A compositionally biased stretch (low complexity) spans 521 to 535 (IPSSSGIPKPGSKVP). Polar residues-rich tracts occupy residues 537 to 548 (VKQTISPGSTAS), 557 to 567 (TKGSPSQSLSK), and 591 to 625 (ASPS…HSHP). Residues 679–707 (ETRRMRTVKNIADLRQNLEETMSSLRGTQ) adopt a coiled-coil conformation. Disordered regions lie at residues 877–1312 (ADSW…SPLF), 1351–1370 (SSSS…TSLH), 1410–1468 (LSES…SAMS), 1650–1778 (GALN…KRQN), 1850–1881 (DRLK…SRQS), and 2360–2385 (SSTQ…ESTL). Residues 882–895 (DSSSVSSGLSDTLD) are compositionally biased toward low complexity. The segment covering 896–925 (NISTDDLNTTSSVSSYSNITVPSRKNTQLR) has biased composition (polar residues). Over residues 942–959 (EELKKPEEDFDSHGDAGG) the composition is skewed to basic and acidic residues. A compositionally biased stretch (polar residues) spans 979-988 (ASLSVSQTGS). Positions 1014–1026 (GKTDDAKASEKGK) are enriched in basic and acidic residues. 2 stretches are compositionally biased toward low complexity: residues 1074–1092 (GSSA…GSAT) and 1157–1170 (SSTS…SSKS). Positions 1187-1196 (GRSSPVTVNQ) are enriched in polar residues. Composition is skewed to low complexity over residues 1206 to 1226 (VSDS…TSAS) and 1253 to 1263 (GAKAGGKSASA). The span at 1264–1289 (PNTEGVKSSSVMPSPSTTLARQGSLE) shows a compositional bias: polar residues. The span at 1296 to 1305 (GSMGSAGGLS) shows a compositional bias: gly residues. Over residues 1436-1445 (NQEEGKEWLR) the composition is skewed to basic and acidic residues. The span at 1446-1462 (SHSTGGLQDTGNQSPLV) shows a compositional bias: polar residues. Phosphoserine occurs at positions 1459 and 1463. Positions 1562 to 1653 (AEEKAHSEQI…AQAAIQGALN (92 aa)) form a coiled coil. The span at 1672–1689 (SVSSINSATSHSSIGSGN) shows a compositional bias: low complexity. The span at 1701-1714 (WVNSRGSELRSSFK) shows a compositional bias: polar residues. A coiled-coil region spans residues 1794–1861 (EAEAEIILQL…LKAETGNTAK (68 aa)). Positions 1867–1881 (SESSSSTSSSSSRQS) are enriched in low complexity.

It belongs to the Nav/unc-53 family. In terms of tissue distribution, highly expressed in brain. Expressed at low levels in heart and placenta. Present in activated T-cells but not in resting T-cells (at protein level). Down-regulated in primary neuroblastoma.

It localises to the nucleus outer membrane. Its function is as follows. Plays a role in cell migration. May be involved in neuron regeneration. May regulate IL2 production by T-cells. In Homo sapiens (Human), this protein is Neuron navigator 3 (NAV3).